The chain runs to 211 residues: Small ribosomal subunit protein uS3 (211 aa).

The KH type-2 domain maps to 38 to 106; it reads LRKFIKKAFY…NIELNIIEVK (69 aa).

Belongs to the universal ribosomal protein uS3 family. As to quaternary structure, part of the 30S ribosomal subunit. Forms a tight complex with proteins S10 and S14.

Functionally, binds the lower part of the 30S subunit head. Binds mRNA in the 70S ribosome, positioning it for translation. This Ehrlichia chaffeensis (strain ATCC CRL-10679 / Arkansas) protein is Small ribosomal subunit protein uS3.